We begin with the raw amino-acid sequence, 427 residues long: 3-phosphoshikimate 1-carboxyvinyltransferase (427 aa).

Lys-20 provides a ligand contact to phosphoenolpyruvate. Ser-21 and Arg-25 together coordinate 3-phosphoshikimate. Phosphoenolpyruvate contacts are provided by Gly-92 and Arg-120. 3-phosphoshikimate is bound by residues Ser-166, Ala-167, Gln-168, Asp-312, and Lys-339. Phosphoenolpyruvate is bound at residue Gln-168. Asp-312 (proton acceptor) is an active-site residue. Phosphoenolpyruvate-binding residues include Arg-343 and Arg-385.

In terms of assembly, homotetramer.

It localises to the cytoplasm. It catalyses the reaction 3-phosphoshikimate + phosphoenolpyruvate = 5-O-(1-carboxyvinyl)-3-phosphoshikimate + phosphate. The protein operates within metabolic intermediate biosynthesis; chorismate biosynthesis; chorismate from D-erythrose 4-phosphate and phosphoenolpyruvate: step 6/7. With respect to regulation, competitively inhibited by glyphosate. Activated by ammonium, rubidium or potassium ions. Functionally, catalyzes the transfer of the enolpyruvyl moiety of phosphoenolpyruvate (PEP) to the 5-hydroxyl of shikimate-3-phosphate (S3P) to produce enolpyruvyl shikimate-3-phosphate and inorganic phosphate. The chain is 3-phosphoshikimate 1-carboxyvinyltransferase from Streptococcus pneumoniae serotype 4 (strain ATCC BAA-334 / TIGR4).